An 812-amino-acid chain; its full sequence is Mitochondrial intermediate peptidase (812 aa).

Residues 1–35 (MLKLLRPRPWVCNSCLNRVAFPKPYPVGSRSTRWL) constitute a mitochondrion transit peptide. Residues 518–544 (STSEGGPAFGSPESAANDGMAASRGAS) are disordered. Histidine 587 provides a ligand contact to Zn(2+). Residue glutamate 588 is part of the active site. Zn(2+)-binding residues include histidine 591 and histidine 594.

This sequence belongs to the peptidase M3 family. It depends on Zn(2+) as a cofactor.

The protein localises to the mitochondrion matrix. It carries out the reaction Release of an N-terminal octapeptide as second stage of processing of some proteins imported into the mitochondrion.. Cleaves proteins, imported into the mitochondrion, to their mature size. While most mitochondrial precursor proteins are processed to the mature form in one step by mitochondrial processing peptidase (MPP), the sequential cleavage by MIP of an octapeptide after initial processing by MPP is a required step for a subgroup of nuclear-encoded precursor proteins destined for the matrix or the inner membrane. In Pyricularia oryzae (strain 70-15 / ATCC MYA-4617 / FGSC 8958) (Rice blast fungus), this protein is Mitochondrial intermediate peptidase (OCT1).